We begin with the raw amino-acid sequence, 126 residues long: Large ribosomal subunit protein bL20c (126 aa).

This sequence belongs to the bacterial ribosomal protein bL20 family.

Its subcellular location is the plastid. It is found in the chloroplast. Binds directly to 23S ribosomal RNA and is necessary for the in vitro assembly process of the 50S ribosomal subunit. It is not involved in the protein synthesizing functions of that subunit. This chain is Large ribosomal subunit protein bL20c, found in Lactuca sativa (Garden lettuce).